The following is a 541-amino-acid chain: Atlastin-3 (541 aa).

The segment at 1 to 22 (MLSPQRTAAVASRGAGDAMENG) is disordered. Positions 1–25 (MLSPQRTAAVASRGAGDAMENGKPG) are N-terminal hypervariable region (HVR). Over 1–445 (MLSPQRTAAV…NVFSTFRTPA (445 aa)) the chain is Cytoplasmic. In terms of domain architecture, GB1/RHD3-type G spans 57–306 (DLDVVVVSVA…LIPYVLNPSK (250 aa)). GDP is bound by residues R70, K71, G72, K73, S74, F75, and R109. D142 lines the Mg(2+) pocket. The GDP site is built by R213, D214, V272, and S275. Residues 344 to 434 (MLQATAANNL…YENFCKHNGS (91 aa)) are 3HB (three-helix bundle) domain. K391 carries the N6-acetyllysine modification. A helical transmembrane segment spans residues 446–466 (VLFTGIAVLYIASGLTGFIGL). A topological domain (lumenal) is located at residue E467. A helical transmembrane segment spans residues 468-488 (VVAQLFNCMVGLLLIALLTWG). At 489-541 (YIRYSGQYLELGGAIDSGAAYVLEQASSHIGNSTQAAVRDAIAGRPPADKKSQ) the chain is on the cytoplasmic side.

The protein belongs to the TRAFAC class dynamin-like GTPase superfamily. GB1/RHD3 GTPase family. GB1 subfamily. Monomeric and homodimeric. The homodimer, transiently formed by two molecules on opposing membranes, is the active form mediating ER membrane fusion. Interacts with ZFYVE27; both proteins are involved in endoplasmic reticulum tubular network organization. Interacts with REEP5; both proteins are involved in endoplasmic reticulum tubular network organization.

It localises to the endoplasmic reticulum membrane. The enzyme catalyses GTP + H2O = GDP + phosphate + H(+). Its function is as follows. Atlastin-3 (ATL3) is a membrane-anchored GTPase that mediates the GTP-dependent fusion of endoplasmic reticulum (ER) membranes, maintaining the continuous ER network. It facilitates the formation of three-way junctions where ER tubules intersect. Two atlastin-3 on neighboring ER tubules bind GTP and form loose homodimers through the GB1/RHD3-type G domains and 3HB regions. Upon GTP hydrolysis, the 3HB regions tighten, pulling the membranes together to drive their fusion. After fusion, the homodimer disassembles upon release of inorganic phosphate (Pi). Subsequently, GDP dissociates, resetting the monomers to a conformation ready for a new fusion cycle. The sequence is that of Atlastin-3 from Rattus norvegicus (Rat).